A 162-amino-acid polypeptide reads, in one-letter code: ATP synthase subunit b (162 aa).

A helical transmembrane segment spans residues 2 to 22 (LEFNATLLAQIVDFIILLIFL).

This sequence belongs to the ATPase B chain family. As to quaternary structure, F-type ATPases have 2 components, F(1) - the catalytic core - and F(0) - the membrane proton channel. F(1) has five subunits: alpha(3), beta(3), gamma(1), delta(1), epsilon(1). F(0) has three main subunits: a(1), b(2) and c(10-14). The alpha and beta chains form an alternating ring which encloses part of the gamma chain. F(1) is attached to F(0) by a central stalk formed by the gamma and epsilon chains, while a peripheral stalk is formed by the delta and b chains.

It localises to the cell membrane. Its function is as follows. F(1)F(0) ATP synthase produces ATP from ADP in the presence of a proton or sodium gradient. F-type ATPases consist of two structural domains, F(1) containing the extramembraneous catalytic core and F(0) containing the membrane proton channel, linked together by a central stalk and a peripheral stalk. During catalysis, ATP synthesis in the catalytic domain of F(1) is coupled via a rotary mechanism of the central stalk subunits to proton translocation. In terms of biological role, component of the F(0) channel, it forms part of the peripheral stalk, linking F(1) to F(0). The chain is ATP synthase subunit b from Pelotomaculum thermopropionicum (strain DSM 13744 / JCM 10971 / SI).